A 534-amino-acid polypeptide reads, in one-letter code: Importin subunit alpha-1b (534 aa).

The 58-residue stretch at 1-58 folds into the IBB domain; the sequence is MSLRPSERAEVRRSRYKVAVDADEGRRRREDNMVEIRKSRREESLLKKRRDGLPAAAA. ARM repeat units lie at residues 111–151, 154–193, 196–236, 238–277, 280–319, 322–362, 365–404, and 408–447; these read SPPI…NIAS, SDNT…NVAG, PKCR…NFCR, KPQP…YLSD, NDKI…NIVT, DMQT…NITA, REQI…NATS, and HDQI…NILK. The disordered stretch occupies residues 505-534; sequence DAMPSGDNAQNGFNFGNQQPNVPSGGFNFG. Residues 514-523 are compositionally biased toward low complexity; that stretch reads QNGFNFGNQQ.

This sequence belongs to the importin alpha family. In terms of assembly, forms a complex with importin subunit beta-1. The whole complex, most stable and composed of importin alpha and importin beta, is referred to as PTAC or pore targeting complex. In terms of tissue distribution, highly expressed in root and weakly in callus, etiolated leaf and green leaf.

Its subcellular location is the cytoplasm. The protein resides in the perinuclear region. In terms of biological role, functions in nuclear protein import. Binds specifically and directly to substrates containing either a simple or bipartite NLS motif. Promotes docking of import substrates to the nuclear envelope. In conjunction with importin beta-1, mediates the nuclear envelope docking, and the subsequent translocation into the nucleus of the constitutive morphogenetic 1 (COP1) protein containing bipartite NLS motif. The sequence is that of Importin subunit alpha-1b from Oryza sativa subsp. japonica (Rice).